The following is a 219-amino-acid chain: Protein-methionine-sulfoxide reductase heme-binding subunit MsrQ (219 aa).

5 helical membrane-spanning segments follow: residues 17-37 (AKPL…YAAW), 88-108 (LFAY…DMGF), 121-141 (PFIL…ATSF), 153-173 (WQLL…HFFW), and 184-204 (VFVY…NHWA).

It belongs to the MsrQ family. As to quaternary structure, heterodimer of a catalytic subunit (MsrP) and a heme-binding subunit (MsrQ). It depends on FMN as a cofactor. The cofactor is heme b.

The protein resides in the cell inner membrane. Functionally, part of the MsrPQ system that repairs oxidized periplasmic proteins containing methionine sulfoxide residues (Met-O), using respiratory chain electrons. Thus protects these proteins from oxidative-stress damage caused by reactive species of oxygen and chlorine generated by the host defense mechanisms. MsrPQ is essential for the maintenance of envelope integrity under bleach stress, rescuing a wide series of structurally unrelated periplasmic proteins from methionine oxidation. MsrQ provides electrons for reduction to the reductase catalytic subunit MsrP, using the quinone pool of the respiratory chain. This is Protein-methionine-sulfoxide reductase heme-binding subunit MsrQ from Polaromonas naphthalenivorans (strain CJ2).